Here is a 309-residue protein sequence, read N- to C-terminus: MVFPAKRLCVVPYMEGVRWAFSCGTWLPSPAEWLLAVRSIQPEEKERIGQFVFARDAKAALAGRLMIRKLVAEKLNIPWDHIRLQRTSKGKPILAKDTLNPYPNFNFNISHQGDYTVLAAEPELQVGIDIMKTSFPGRGSIPEFFHIMKRKFTNKEWETIRSFNDEWSQLDMFYRHWALKESFIKAIGVGLGFEMQRLEFDVSPLSMDIGQVYKETRLILDGEEEKEWAFEESKIDQHHFVAVALRKPDGSRHQNVSYQDDSKPSQRQFTILNFNDLIASAIPMTPEDPSFWDCFCFTEEILIRNGSKS.

CoA contacts are provided by residues R47, 86–91, and 108–111; these read RTSKGK and NISH. Mg(2+)-binding residues include D129 and E181. Residue 181–185 coordinates CoA; the sequence is ESFIK.

The protein belongs to the P-Pant transferase superfamily. AcpS family. In terms of assembly, monomer. The cofactor is Mg(2+).

The protein localises to the cytoplasm. Its subcellular location is the cytosol. The catalysed reaction is apo-[ACP] + CoA = holo-[ACP] + adenosine 3',5'-bisphosphate + H(+). It carries out the reaction apo-[ACP] + acetyl-CoA = acetyl-[ACP] + adenosine 3',5'-bisphosphate + H(+). Catalyzes the post-translational modification of target proteins by phosphopantetheine. Can transfer the 4'-phosphopantetheine moiety from coenzyme A, regardless of whether the CoA is presented in the free thiol form or as an acetyl thioester, to a serine residue of a broad range of acceptors including the acyl carrier domain of FASN. The sequence is that of L-aminoadipate-semialdehyde dehydrogenase-phosphopantetheinyl transferase (Aasdhppt) from Rattus norvegicus (Rat).